The primary structure comprises 369 residues: Chaperone protein DnaJ (369 aa).

The 67-residue stretch at 7 to 73 folds into the J domain; that stretch reads DYYEILGVPR…QKRAMYDRFG (67 aa). The segment at 143–225 adopts a CR-type zinc-finger fold; sequence GAEIPVEYER…CGGSGRVLRK (83 aa). 8 residues coordinate Zn(2+): Cys-156, Cys-159, Cys-173, Cys-176, Cys-199, Cys-202, Cys-213, and Cys-216. CXXCXGXG motif repeat units lie at residues 156–163, 173–180, 199–206, and 213–220; these read CPRCGGTG, CPSCGGTG, CERCGGTG, and CHECGGSG.

Belongs to the DnaJ family. As to quaternary structure, homodimer. It depends on Zn(2+) as a cofactor.

The protein localises to the cytoplasm. Its function is as follows. Participates actively in the response to hyperosmotic and heat shock by preventing the aggregation of stress-denatured proteins and by disaggregating proteins, also in an autonomous, DnaK-independent fashion. Unfolded proteins bind initially to DnaJ; upon interaction with the DnaJ-bound protein, DnaK hydrolyzes its bound ATP, resulting in the formation of a stable complex. GrpE releases ADP from DnaK; ATP binding to DnaK triggers the release of the substrate protein, thus completing the reaction cycle. Several rounds of ATP-dependent interactions between DnaJ, DnaK and GrpE are required for fully efficient folding. Also involved, together with DnaK and GrpE, in the DNA replication of plasmids through activation of initiation proteins. The polypeptide is Chaperone protein DnaJ (Thermotoga petrophila (strain ATCC BAA-488 / DSM 13995 / JCM 10881 / RKU-1)).